Here is a 576-residue protein sequence, read N- to C-terminus: Probable lysosomal cobalamin transporter (576 aa).

Helical transmembrane passes span 8–28 (LIWA…SVFI), 40–60 (VVTF…LLLP), 98–118 (YLLY…VYFW), 145–165 (TISF…VPVA), 188–208 (VLTF…ILYT), 312–332 (LLGG…MLLT), 347–367 (GYIL…VQSA), 377–397 (LTVV…TIGI), 419–439 (LTTA…PMLV), and 503–523 (FFGT…LLVL). The segment at 549 to 576 (RLLTSSARGVGDTYQSVGGRNNFSTRAG) is disordered. Polar residues predominate over residues 561–576 (TYQSVGGRNNFSTRAG). The N-linked (GlcNAc...) asparagine glycan is linked to Asn570.

It belongs to the LIMR family. LMBRD1 subfamily.

The protein localises to the lysosome membrane. In terms of biological role, probable lysosomal cobalamin transporter. Required to export cobalamin from lysosomes allowing its conversion to cofactors. In Aspergillus niger (strain ATCC MYA-4892 / CBS 513.88 / FGSC A1513), this protein is Probable lysosomal cobalamin transporter.